A 323-amino-acid chain; its full sequence is Ferrochelatase (323 aa).

Residues His-196 and Glu-277 each coordinate Fe cation.

Belongs to the ferrochelatase family.

The protein localises to the cytoplasm. It catalyses the reaction heme b + 2 H(+) = protoporphyrin IX + Fe(2+). It functions in the pathway porphyrin-containing compound metabolism; protoheme biosynthesis; protoheme from protoporphyrin-IX: step 1/1. Its function is as follows. Catalyzes the ferrous insertion into protoporphyrin IX. This Haemophilus influenzae (strain ATCC 51907 / DSM 11121 / KW20 / Rd) protein is Ferrochelatase.